The sequence spans 165 residues: SsrA-binding protein (165 aa).

The disordered stretch occupies residues 141–165; sequence EDRRHAIAERETKREMDREISRRRR.

It belongs to the SmpB family.

The protein resides in the cytoplasm. In terms of biological role, required for rescue of stalled ribosomes mediated by trans-translation. Binds to transfer-messenger RNA (tmRNA), required for stable association of tmRNA with ribosomes. tmRNA and SmpB together mimic tRNA shape, replacing the anticodon stem-loop with SmpB. tmRNA is encoded by the ssrA gene; the 2 termini fold to resemble tRNA(Ala) and it encodes a 'tag peptide', a short internal open reading frame. During trans-translation Ala-aminoacylated tmRNA acts like a tRNA, entering the A-site of stalled ribosomes, displacing the stalled mRNA. The ribosome then switches to translate the ORF on the tmRNA; the nascent peptide is terminated with the 'tag peptide' encoded by the tmRNA and targeted for degradation. The ribosome is freed to recommence translation, which seems to be the essential function of trans-translation. This chain is SsrA-binding protein, found in Anaeromyxobacter sp. (strain Fw109-5).